A 217-amino-acid polypeptide reads, in one-letter code: Phosphoribosylformylglycinamidine synthase subunit PurQ (217 aa).

One can recognise a Glutamine amidotransferase type-1 domain in the interval 2-217 (NIGIIVFPGS…GKSILSTLLS (216 aa)). Cysteine 86 (nucleophile) is an active-site residue. Catalysis depends on residues histidine 194 and glutamate 196.

As to quaternary structure, part of the FGAM synthase complex composed of 1 PurL, 1 PurQ and 2 PurS subunits.

Its subcellular location is the cytoplasm. The catalysed reaction is N(2)-formyl-N(1)-(5-phospho-beta-D-ribosyl)glycinamide + L-glutamine + ATP + H2O = 2-formamido-N(1)-(5-O-phospho-beta-D-ribosyl)acetamidine + L-glutamate + ADP + phosphate + H(+). The enzyme catalyses L-glutamine + H2O = L-glutamate + NH4(+). The protein operates within purine metabolism; IMP biosynthesis via de novo pathway; 5-amino-1-(5-phospho-D-ribosyl)imidazole from N(2)-formyl-N(1)-(5-phospho-D-ribosyl)glycinamide: step 1/2. Part of the phosphoribosylformylglycinamidine synthase complex involved in the purines biosynthetic pathway. Catalyzes the ATP-dependent conversion of formylglycinamide ribonucleotide (FGAR) and glutamine to yield formylglycinamidine ribonucleotide (FGAM) and glutamate. The FGAM synthase complex is composed of three subunits. PurQ produces an ammonia molecule by converting glutamine to glutamate. PurL transfers the ammonia molecule to FGAR to form FGAM in an ATP-dependent manner. PurS interacts with PurQ and PurL and is thought to assist in the transfer of the ammonia molecule from PurQ to PurL. The polypeptide is Phosphoribosylformylglycinamidine synthase subunit PurQ (Prochlorococcus marinus (strain NATL2A)).